A 349-amino-acid chain; its full sequence is Fe(3+) ions import ATP-binding protein FbpC (349 aa).

In terms of domain architecture, ABC transporter spans 4 to 236 (LDFNKIGKSY…PIDEPTATFL (233 aa)). 36-43 (GPSGSGKT) is an ATP binding site.

It belongs to the ABC transporter superfamily. Fe(3+) ion importer (TC 3.A.1.10) family. As to quaternary structure, the complex is composed of two ATP-binding proteins (FbpC), two transmembrane proteins (FbpB) and a solute-binding protein (FbpA).

It is found in the cell inner membrane. The enzyme catalyses Fe(3+)(out) + ATP + H2O = Fe(3+)(in) + ADP + phosphate + H(+). Functionally, part of the ABC transporter complex FbpABC involved in Fe(3+) ions import. Responsible for energy coupling to the transport system. The polypeptide is Fe(3+) ions import ATP-binding protein FbpC (Yersinia enterocolitica).